Reading from the N-terminus, the 436-residue chain is Kynureninase (436 aa).

Pyridoxal 5'-phosphate contacts are provided by residues leucine 88, threonine 89, 116-119 (FPSD), aspartate 202, histidine 205, and tyrosine 227. The residue at position 228 (lysine 228) is an N6-(pyridoxal phosphate)lysine. Pyridoxal 5'-phosphate-binding residues include tryptophan 280 and asparagine 308.

It belongs to the kynureninase family. Homodimer. It depends on pyridoxal 5'-phosphate as a cofactor.

It localises to the cytoplasm. It carries out the reaction L-kynurenine + H2O = anthranilate + L-alanine + H(+). The enzyme catalyses 3-hydroxy-L-kynurenine + H2O = 3-hydroxyanthranilate + L-alanine + H(+). It functions in the pathway amino-acid degradation; L-kynurenine degradation; L-alanine and anthranilate from L-kynurenine: step 1/1. The protein operates within cofactor biosynthesis; NAD(+) biosynthesis; quinolinate from L-kynurenine: step 2/3. Catalyzes the cleavage of L-kynurenine (L-Kyn) and L-3-hydroxykynurenine (L-3OHKyn) into anthranilic acid (AA) and 3-hydroxyanthranilic acid (3-OHAA), respectively. The polypeptide is Kynureninase (Schistosoma japonicum (Blood fluke)).